A 672-amino-acid polypeptide reads, in one-letter code: uncharacterized protein (672 aa).

An N-terminal signal peptide occupies residues 1–24 (MKTLKTLKIFIIICIASVSLASFA). 6 helical membrane-spanning segments follow: residues 226–246 (IIGA…ALNK), 254–274 (IALF…LGPL), 410–430 (IILA…LYFI), 436–456 (CMIT…MALF), 469–489 (VCIS…LLIT), and 562–582 (VVSI…FYYF). The segment at 626-672 (ASQGKPSVGDKPDVGGKRKEGEQQGGDSESGAGGGLADLASGSGGGK) is disordered. Basic and acidic residues predominate over residues 633–647 (VGDKPDVGGKRKEGE). Over residues 656 to 672 (GAGGGLADLASGSGGGK) the composition is skewed to gly residues.

Belongs to the TrbL/VirB6 family.

The protein resides in the cell membrane. This is an uncharacterized protein from Rickettsia felis (strain ATCC VR-1525 / URRWXCal2) (Rickettsia azadi).